We begin with the raw amino-acid sequence, 340 residues long: MPSIRLADLAQQLDAQVHGDGDLVITGIASMHSAEPSQITFLSNSRYQEQLATCNAGAVVLTEADLPFCKSAALVVKNPYLTYARMAQIMDTTPQPAQNIAPGAVISPQATLGENVSIGANAVIESGVVLGDNVVIGAGCFIGKNTHIGAGSRLWANVSVYHEVVIGQNCLIQSGTVIGADGFGYANDRGNWIKIPQLGSVHIGDRVEIGACTTIDRGALDNTIIGNGVIIDNQCQIAHNVVIGDNTAVAGGVIMAGSLKVGRYCMIGGASVINGHMEICDKVTITGMGMVMRPITEPGLYPSGIPLQPNKVWRKTAALVMNIDGINKRLKAIERKIDKE.

The Proton acceptor role is filled by His239.

It belongs to the transferase hexapeptide repeat family. LpxD subfamily. In terms of assembly, homotrimer.

It catalyses the reaction a UDP-3-O-[(3R)-3-hydroxyacyl]-alpha-D-glucosamine + a (3R)-hydroxyacyl-[ACP] = a UDP-2-N,3-O-bis[(3R)-3-hydroxyacyl]-alpha-D-glucosamine + holo-[ACP] + H(+). The enzyme catalyses UDP-3-O-[(3R)-3-hydroxytetradecanoyl]-alpha-D-glucosamine + (3R)-hydroxytetradecanoyl-[ACP] = UDP-2-N,3-O-bis[(3R)-3-hydroxytetradecanoyl]-alpha-D-glucosamine + holo-[ACP] + H(+). The protein operates within glycolipid biosynthesis; lipid IV(A) biosynthesis; lipid IV(A) from (3R)-3-hydroxytetradecanoyl-[acyl-carrier-protein] and UDP-N-acetyl-alpha-D-glucosamine: step 3/6. In terms of biological role, catalyzes the N-acylation of UDP-3-O-(hydroxytetradecanoyl)glucosamine using 3-hydroxytetradecanoyl-ACP as the acyl donor. Is involved in the biosynthesis of lipid A, a phosphorylated glycolipid that anchors the lipopolysaccharide to the outer membrane of the cell. The protein is UDP-3-O-(3-hydroxymyristoyl)glucosamine N-acyltransferase of Yersinia enterocolitica.